The primary structure comprises 239 residues: Endonuclease V (239 aa).

Residues aspartate 48 and aspartate 116 each contribute to the Mg(2+) site.

Belongs to the endonuclease V family. It depends on Mg(2+) as a cofactor.

Its subcellular location is the cytoplasm. The enzyme catalyses Endonucleolytic cleavage at apurinic or apyrimidinic sites to products with a 5'-phosphate.. Functionally, DNA repair enzyme involved in the repair of deaminated bases. Selectively cleaves double-stranded DNA at the second phosphodiester bond 3' to a deoxyinosine leaving behind the intact lesion on the nicked DNA. This Xanthomonas oryzae pv. oryzae (strain MAFF 311018) protein is Endonuclease V.